The following is an 820-amino-acid chain: Trimethylamine-N-oxide reductase (820 aa).

The segment at residues 1–33 (MAITRRSFLKGVATTSAASIIGPSLLTSVSAQA) is a signal peptide (tat-type signal). Residue serine 179 coordinates Mo-bis(molybdopterin guanine dinucleotide).

This sequence belongs to the prokaryotic molybdopterin-containing oxidoreductase family. It depends on Mo-bis(molybdopterin guanine dinucleotide) as a cofactor. Post-translationally, predicted to be exported by the Tat system. The position of the signal peptide cleavage has not been experimentally proven.

The protein resides in the periplasm. The catalysed reaction is trimethylamine + 2 Fe(III)-[cytochrome c] + H2O = trimethylamine N-oxide + 2 Fe(II)-[cytochrome c] + 3 H(+). Its function is as follows. Reduces trimethylamine-N-oxide (TMAO) into trimethylamine; an anaerobic reaction coupled to energy-yielding reactions. The protein is Trimethylamine-N-oxide reductase (torA) of Vibrio cholerae serotype O1 (strain ATCC 39315 / El Tor Inaba N16961).